The primary structure comprises 64 residues: NSGNPCCDPVTCQPRRGEHCVSGKCCRNCKFLRAGTVCKRAVGDDMDDYCTGISSDCPRNPYKD.

The region spanning 1–64 (NSGNPCCDPV…SDCPRNPYKD (64 aa)) is the Disintegrin domain. 4 disulfides stabilise this stretch: cysteine 6–cysteine 29, cysteine 20–cysteine 26, cysteine 25–cysteine 50, and cysteine 38–cysteine 57. Positions 42-44 (VGD) match the Cell attachment site; atypical (VGD) motif.

This sequence belongs to the venom metalloproteinase (M12B) family. P-II subfamily. P-IIe sub-subfamily. As to quaternary structure, heterodimer with VLO5B; disulfide-linked. As to expression, expressed by the venom gland.

It localises to the secreted. Functionally, poor inhibitor of platelet aggregation. The disintegrin inhibits the adhesion of the alpha-4/beta-1 (ITGA4/ITGB1) integrin to VCAM-1. Inhibition on alpha-IIb/beta-3 (ITGA2B/ITGB3) is low. The chain is Disintegrin VLO5A from Macrovipera lebetina obtusa (Levant blunt-nosed viper).